Here is a 492-residue protein sequence, read N- to C-terminus: Argininosuccinate lyase (492 aa).

It belongs to the lyase 1 family. Argininosuccinate lyase subfamily.

Its subcellular location is the cytoplasm. The enzyme catalyses 2-(N(omega)-L-arginino)succinate = fumarate + L-arginine. It functions in the pathway amino-acid biosynthesis; L-arginine biosynthesis; L-arginine from L-ornithine and carbamoyl phosphate: step 3/3. The sequence is that of Argininosuccinate lyase from Methanoculleus marisnigri (strain ATCC 35101 / DSM 1498 / JR1).